The following is a 173-amino-acid chain: Probable glutathione peroxidase 5 (173 aa).

The N-myristoyl glycine moiety is linked to residue Gly-2. Cys-46 is a catalytic residue.

Belongs to the glutathione peroxidase family. Ubiquitous.

Its subcellular location is the cell membrane. The catalysed reaction is 2 glutathione + H2O2 = glutathione disulfide + 2 H2O. Functionally, may constitute a glutathione peroxidase-like protective system against oxidative stresses. The sequence is that of Probable glutathione peroxidase 5 (GPX5) from Arabidopsis thaliana (Mouse-ear cress).